Here is a 124-residue protein sequence, read N- to C-terminus: Small ribosomal subunit protein uS12 (124 aa).

Asp-89 carries the post-translational modification 3-methylthioaspartic acid.

This sequence belongs to the universal ribosomal protein uS12 family. Part of the 30S ribosomal subunit. Contacts proteins S8 and S17. May interact with IF1 in the 30S initiation complex.

In terms of biological role, with S4 and S5 plays an important role in translational accuracy. Interacts with and stabilizes bases of the 16S rRNA that are involved in tRNA selection in the A site and with the mRNA backbone. Located at the interface of the 30S and 50S subunits, it traverses the body of the 30S subunit contacting proteins on the other side and probably holding the rRNA structure together. The combined cluster of proteins S8, S12 and S17 appears to hold together the shoulder and platform of the 30S subunit. In Vibrio vulnificus (strain CMCP6), this protein is Small ribosomal subunit protein uS12.